Here is a 569-residue protein sequence, read N- to C-terminus: Proline--tRNA ligase (569 aa).

The protein belongs to the class-II aminoacyl-tRNA synthetase family. ProS type 1 subfamily. As to quaternary structure, homodimer.

It localises to the cytoplasm. The catalysed reaction is tRNA(Pro) + L-proline + ATP = L-prolyl-tRNA(Pro) + AMP + diphosphate. Its function is as follows. Catalyzes the attachment of proline to tRNA(Pro) in a two-step reaction: proline is first activated by ATP to form Pro-AMP and then transferred to the acceptor end of tRNA(Pro). As ProRS can inadvertently accommodate and process non-cognate amino acids such as alanine and cysteine, to avoid such errors it has two additional distinct editing activities against alanine. One activity is designated as 'pretransfer' editing and involves the tRNA(Pro)-independent hydrolysis of activated Ala-AMP. The other activity is designated 'posttransfer' editing and involves deacylation of mischarged Ala-tRNA(Pro). The misacylated Cys-tRNA(Pro) is not edited by ProRS. The chain is Proline--tRNA ligase from Dehalococcoides mccartyi (strain ATCC BAA-2100 / JCM 16839 / KCTC 5957 / BAV1).